The chain runs to 270 residues: Glutamate 5-kinase (270 aa).

Residue lysine 15 participates in ATP binding. 3 residues coordinate substrate: serine 55, aspartate 142, and asparagine 158. ATP contacts are provided by residues 178–179 (SD) and 220–226 (TGGMLSK).

Belongs to the glutamate 5-kinase family.

The protein localises to the cytoplasm. The catalysed reaction is L-glutamate + ATP = L-glutamyl 5-phosphate + ADP. It functions in the pathway amino-acid biosynthesis; L-proline biosynthesis; L-glutamate 5-semialdehyde from L-glutamate: step 1/2. In terms of biological role, catalyzes the transfer of a phosphate group to glutamate to form L-glutamate 5-phosphate. This Streptococcus uberis (strain ATCC BAA-854 / 0140J) protein is Glutamate 5-kinase.